A 460-amino-acid chain; its full sequence is UDP-N-acetylmuramoylalanine--D-glutamate ligase (460 aa).

Residue 115 to 121 participates in ATP binding; the sequence is GTNGKTT.

This sequence belongs to the MurCDEF family.

It is found in the cytoplasm. The catalysed reaction is UDP-N-acetyl-alpha-D-muramoyl-L-alanine + D-glutamate + ATP = UDP-N-acetyl-alpha-D-muramoyl-L-alanyl-D-glutamate + ADP + phosphate + H(+). It participates in cell wall biogenesis; peptidoglycan biosynthesis. Its function is as follows. Cell wall formation. Catalyzes the addition of glutamate to the nucleotide precursor UDP-N-acetylmuramoyl-L-alanine (UMA). This is UDP-N-acetylmuramoylalanine--D-glutamate ligase from Salinibacter ruber (strain DSM 13855 / M31).